Consider the following 1055-residue polypeptide: MAPAATAAASSGKGSFDLATLFVADKAARDEAGLALADAVKKSGVEFFTQIGFNDAIVKALNDKKSQSAREGACEVISTLCENGAAQLLEPHVISSAENTPFPALLEAFADKVAAVKTAAIAAVKAIVQSMNPWASFVLLPALLNLIRTSGKWQIKAGSLEILQQLITSAPYQMGEAMPDLVPVLAGAVWDTKSDVKKAAKATLEKAVSLVENKDIEKFVPALVKSLLNPIEEVPKTISLLSATTFVSEVTAPTISLIAPLLIRGLDERPTATKRKVCVIADNMSKLVDSEYTVRPFLPQLLPRLIKTAETIADPEARSVANRAIVTLRRIGKVPVESDGSDLPPLPVAEGPHLATNFVALVKKHGGVSVEQTNPGLAYAGVLAASLVNHHNFDQKTWESTLPPYLKLALPSYDSLPAVRELLQKKADEAETDDAKFPDEEEGEDLCNIEQFNLAYGAKILLHHANMRLKRGHRYGLCGRNGSGKSTLMNAIINNQVEGFPPPTEVRTFYVQHDIDGSEAEISILDWVLSDKRLLATPEEIKSTLESVGFDEVKQKNSIGSLSGGWKMKLALARAILFKADILLLDEPTNHLDVLNVDWLINYLTSLTRCTSIIVSHDSDFLNRTVTDVLHLNNFKLKRYPGNLEEFVKHVPEAKSYYQLDVAEDYQFKLPNPPLLDGVKTKEKSLLKMRNVSFQYPGSSIQQLYDISLQVSLSSRVAVLGPNGSGKSTLVKLLTGETEPNLGGQVWKHPNLVIGYVAQHAFHHIDNHLDSTPLEYMLWRYQTGEDLEEMHKANRVMTEAELAKMKEGATVIKDGVKRIIDELVARKKLKQSYEYEVSFKGMSSAENIWISRDELVARGFEKKVMELDTREAQRLGLMRPLVRREIEKHFEDFGLDAEFVSHNSMRGLSGGQKVKVVLGAATWRRPHIICLDEPTNYLDRESLAALIAALKNFEGGVLIITHNREFSESICTEVWAMREGHLEASGHNWVEGQGSGERIDKKAGDDDEVEYDALGNPIVKAKKEKKLSAADKRKAKKDRMARRKRGEEVFSDEEL.

Residue valine 45 coordinates ADP. HEAT repeat units lie at residues 45–86 (VEFF…NGAA), 96–133 (SAENTPFPALLEAFADKVAAVKTAAIAAVKAIVQSMNP), 135–172 (ASFVLLPALLNLIRTSGKWQIKAGSLEILQQLITSAPY), 175–213 (GEAMPDLVPVLAGAVWDTKSDVKKAAKATLEKAVSLVEN), 217–255 (EKFVPALVKSLLNPIEEVPKTISLLSATTFVSEVTAPTI), 257–290 (LIAPLLIRGLDERPTATKRKVCVIADNMSKLVDS), and 295–337 (RPFL…VPVE). 2 consecutive ABC transporter domains span residues 447–659 (CNIE…SYYQ) and 687–1004 (LKMR…KKAG). 4 residues coordinate ADP: asparagine 723, glutamate 933, asparagine 936, and histidine 962. Disordered stretches follow at residues 987–1006 (HNWVEGQGSGERIDKKAGDD) and 1024–1055 (EKKLSAADKRKAKKDRMARRKRGEEVFSDEEL). Residues 1033 to 1044 (RKAKKDRMARRK) are compositionally biased toward basic residues.

This sequence belongs to the ABC transporter superfamily. ABCF family. EF3 subfamily. In terms of assembly, associates with ribosomes.

It localises to the cytoplasm. It is found in the cytosol. The catalysed reaction is ATP + H2O = ADP + phosphate + H(+). Its pathway is protein biosynthesis; polypeptide chain elongation. Ribosome-dependent ATPase that functions in cytoplasmic translation elongation. Required for the ATP-dependent release of deacylated tRNA from the ribosomal E-site during protein biosynthesis. Stimulates the eEF1A-dependent binding of aminoacyl-tRNA to the ribosomal A-site, which has reduced affinity for tRNA as long as the E-site is occupied. Assists translation termination by stimulating the release of nascent protein from the ribosome by release factors. Appears to target calcium-channel protein CCH1 to the plasma membrane. The chain is Elongation factor 3 from Cryptococcus neoformans var. neoformans serotype D (strain JEC21 / ATCC MYA-565) (Filobasidiella neoformans).